Reading from the N-terminus, the 397-residue chain is Putative teichuronic acid biosynthesis glycosyltransferase TuaH (397 aa).

The protein belongs to the glycosyltransferase group 1 family.

Its pathway is cell wall biogenesis; teichuronic acid biosynthesis. The protein is Putative teichuronic acid biosynthesis glycosyltransferase TuaH (tuaH) of Bacillus subtilis (strain 168).